Here is a 429-residue protein sequence, read N- to C-terminus: Glutamate-1-semialdehyde 2,1-aminomutase (429 aa).

Lys265 carries the post-translational modification N6-(pyridoxal phosphate)lysine.

It belongs to the class-III pyridoxal-phosphate-dependent aminotransferase family. HemL subfamily. In terms of assembly, homodimer. The cofactor is pyridoxal 5'-phosphate.

It localises to the cytoplasm. The catalysed reaction is (S)-4-amino-5-oxopentanoate = 5-aminolevulinate. The protein operates within porphyrin-containing compound metabolism; protoporphyrin-IX biosynthesis; 5-aminolevulinate from L-glutamyl-tRNA(Glu): step 2/2. This Acidobacterium capsulatum (strain ATCC 51196 / DSM 11244 / BCRC 80197 / JCM 7670 / NBRC 15755 / NCIMB 13165 / 161) protein is Glutamate-1-semialdehyde 2,1-aminomutase.